We begin with the raw amino-acid sequence, 492 residues long: Probable endopolygalacturonase D (492 aa).

Residues 1 to 16 (MKRSALILSFLPLVFG) form the signal peptide. Cys-151 and Cys-166 are oxidised to a cystine. 4 PbH1 repeats span residues 216–238 (GTSV…AYWD), 258–280 (MYNS…EIES), 281–319 (TEHL…DIKE), and 320–341 (SSYF…AVTS). The N-linked (GlcNAc...) asparagine glycan is linked to Asn-292. The Proton donor role is filled by Asp-334. Cysteines 336 and 352 form a disulfide. Residue His-356 is part of the active site. 3 PbH1 repeats span residues 371-392 (VNGV…RIKT), 400-422 (VYNI…DVQQ), and 434-478 (TNGV…SITG). Asn-407 and Asn-441 each carry an N-linked (GlcNAc...) asparagine glycan. Disulfide bonds link Cys-461-Cys-466 and Cys-484-Cys-491.

Belongs to the glycosyl hydrolase 28 family.

Its subcellular location is the secreted. It catalyses the reaction (1,4-alpha-D-galacturonosyl)n+m + H2O = (1,4-alpha-D-galacturonosyl)n + (1,4-alpha-D-galacturonosyl)m.. Involved in maceration and soft-rotting of plant tissue. Hydrolyzes the 1,4-alpha glycosidic bonds of de-esterified pectate in the smooth region of the plant cell wall. The protein is Probable endopolygalacturonase D (pgaD) of Aspergillus oryzae (strain ATCC 42149 / RIB 40) (Yellow koji mold).